We begin with the raw amino-acid sequence, 1245 residues long: Structural polyprotein (1245 aa).

The tract at residues 1–106 is disordered; it reads MNRGFFNMLG…KPKPGKRQRM (106 aa). Positions 37–70 are host transcription inhibition; the sequence is GLASQIQQLTTAVSALVIGQATRPQPPRPRPPPR. Residues 38–49 show a composition bias toward polar residues; sequence LASQIQQLTTAV. The Nuclear localization signal signature appears at 63–100; that stretch reads PRPRPPPRQKKQAPKQPPKPKKPKTQEKKKKQPAKPKP. Residues 67–106 show a composition bias toward basic residues; that stretch reads PPPRQKKQAPKQPPKPKKPKTQEKKKKQPAKPKPGKRQRM. The interval 86–115 is binding to the viral RNA; sequence KTQEKKKKQPAKPKPGKRQRMALKLEADRL. A ribosome-binding region spans residues 100 to 114; the sequence is PGKRQRMALKLEADR. One can recognise a Peptidase S3 domain in the interval 114–264; sequence RLFDVKNEDG…KTTPEGTEEW (151 aa). Histidine 141 acts as the Charge relay system in catalysis. Positions 146 to 156 match the Nuclear export signal motif; sequence IDHPVLSKLKF. Residues 157–162 form an interaction with spike glycoprotein E2 region; it reads TKSSAY. Residue aspartate 163 is the Charge relay system of the active site. Residues 185–195 are dimerization of the capsid protein; the sequence is PEGFYNWHHGA. Residue serine 215 is the Charge relay system of the active site. The tract at residues 221–225 is dimerization of the capsid protein; the sequence is DNSGR. The interval 249 to 253 is interaction with spike glycoprotein E2; it reads SKGKT. The functions as an uncleaved signal peptide for the precursor of protein E3/E2 stretch occupies residues 265-279; sequence SAAPLVTAMCLLGNV. N-linked (GlcNAc...) asparagine; by host glycosylation is present at asparagine 278. Intrachain disulfides connect cysteine 283–cysteine 289, cysteine 480–cysteine 594, cysteine 529–cysteine 554, and cysteine 531–cysteine 548. Over 329–690 the chain is Extracellular; it reads SVIDDFTLTS…HEIVQHYYHR (362 aa). Asparagine 524 carries an N-linked (GlcNAc...) asparagine; by host glycan. The N-linked (GlcNAc...) asparagine; by host glycan is linked to asparagine 646. A coiled-coil region spans residues 682–730; the sequence is EIVQHYYHRHPVYTILAVASATVAMMIGVTVAVLCACKARRECLTPYAL. The chain crosses the membrane as a helical span at residues 691 to 718; it reads HPVYTILAVASATVAMMIGVTVAVLCAC. Residues 719-723 form an interaction with the capsid protein region; sequence KARRE. The Cytoplasmic segment spans residues 719-751; the sequence is KARRECLTPYALAPNAVIPTSLALLCCVRSANA. S-palmitoyl cysteine; by host attachment occurs at residues cysteine 724, cysteine 744, and cysteine 745. A disulfide bridge links cysteine 724 with cysteine 745. The Extracellular segment spans residues 752–763; it reads ETFTETMSYLWS. The chain crosses the membrane as a helical span at residues 764 to 784; it reads NSQPFFWVQLCIPLAAFIVLM. Position 785 (arginine 785) is a topological domain, cytoplasmic. Residues 786–806 form a helical membrane-spanning segment; the sequence is CCSCCLPFLVVAGAYLAKVDA. Residues 807–1214 are Extracellular-facing; the sequence is YEHATTVPNV…QAAISKTSWS (408 aa). 4 disulfides stabilise this stretch: cysteine 855/cysteine 920, cysteine 868/cysteine 900, cysteine 869/cysteine 902, and cysteine 874/cysteine 884. Positions 890–907 are E1 fusion peptide loop; sequence VYPFMWGGAQCFCDSENS. Residues asparagine 945 and asparagine 1051 are each glycosylated (N-linked (GlcNAc...) asparagine; by host). Disulfide bonds link cysteine 1065/cysteine 1077, cysteine 1107/cysteine 1182, cysteine 1112/cysteine 1186, and cysteine 1134/cysteine 1176. A coiled-coil region spans residues 1196–1245; the sequence is TPHKNDQEFQAAISKTSWSWLFALFGGASSLLIIGLMIFACSMMLTSTRR. A helical membrane pass occupies residues 1215-1239; sequence WLFALFGGASSLLIIGLMIFACSMM. At 1240–1245 the chain is on the cytoplasmic side; the sequence is LTSTRR.

This sequence belongs to the alphavirus structural polyprotein family. In terms of assembly, homomultimer. Interacts with host karyopherin KPNA4; this interaction allows the nuclear import of the viral capsid protein. Interacts with spike glycoprotein E2. Interacts with host IRAK1; the interaction leads to inhibition of IRAK1-dependent signaling. As to quaternary structure, the precursor of protein E3/E2 and E1 form a heterodimer shortly after synthesis. The precursor of protein E3/E2 and E1 form a heterodimer shortly after synthesis. Processing of the precursor of protein E3/E2 into E2 and E3 results in a heterodimer of the spike glycoproteins E2 and E1. Spike at virion surface are constituted of a trimer of E2-E1 heterodimers. After target cell attachment and endocytosis, E1 change conformation to form homotrimers. E2-E1 heterodimers interact with host VLDLR or LRP8/APOER2 to mediate viral entry. Interacts with 6K protein. In terms of assembly, interacts with spike glycoprotein E1. Processing of the precursor of protein E3/E2 into E2 and E3 results in a heterodimer of the spike glycoproteins E2 and E1. Spike at virion surface are constituted of a trimer of E2-E1 heterodimers. E2-E1 heterodimers interact with host VLDLR or LRP8/APOER2 to mediate viral entry. Interacts with 6K protein. Interacts with the capsid protein. As to quaternary structure, oligomer. Interacts with spike glycoprotein E1. Interacts with spike glycoprotein E2. Specific enzymatic cleavages in vivo yield mature proteins. Capsid protein is auto-cleaved during polyprotein translation, unmasking a signal peptide at the N-terminus of the precursor of E3/E2. The remaining polyprotein is then targeted to the host endoplasmic reticulum, where host signal peptidase cleaves it into pE2, 6K and E1 proteins. pE2 is further processed to mature E3 and E2 by host furin in trans-Golgi vesicle. Post-translationally, palmitoylated via thioester bonds. These palmitoylations may induce disruption of the C-terminus transmembrane. This would result in the reorientation of E2 C-terminus from lumenal to cytoplasmic side. In terms of processing, N-glycosylated. Palmitoylated via thioester bonds.

The protein localises to the virion. Its subcellular location is the host cytoplasm. It localises to the host cell membrane. It is found in the host nucleus. The protein resides in the virion membrane. The protein localises to the host Golgi apparatus. Its subcellular location is the host trans-Golgi network. It localises to the host endoplasmic reticulum. The catalysed reaction is Autocatalytic release of the core protein from the N-terminus of the togavirus structural polyprotein by hydrolysis of a -Trp-|-Ser- bond.. Its activity is regulated as follows. The channel activity is blocked by 5-N, N-Hexamethylene amiloride. Functionally, forms an icosahedral capsid with a T=4 symmetry composed of 240 copies of the capsid protein surrounded by a lipid membrane through which penetrate 80 spikes composed of trimers of E1-E2 heterodimers. The capsid protein binds to the viral RNA genome at a site adjacent to a ribosome binding site for viral genome translation following genome release. Possesses a protease activity that results in its autocatalytic cleavage from the nascent structural protein. Following its self-cleavage, the capsid protein transiently associates with ribosomes, and within several minutes the protein binds to viral RNA and rapidly assembles into icosahedric core particles. The resulting nucleocapsid eventually associates with the cytoplasmic domain of the spike glycoprotein E2 at the cell membrane, leading to budding and formation of mature virions. In case of infection, new virions attach to target cells and after clathrin-mediated endocytosis their membrane fuses with the host endosomal membrane. This leads to the release of the nucleocapsid into the cytoplasm, followed by an uncoating event necessary for the genomic RNA to become accessible. The uncoating might be triggered by the interaction of capsid proteins with ribosomes. Binding of ribosomes would release the genomic RNA since the same region is genomic RNA-binding and ribosome-binding. Specifically inhibits interleukin-1 receptor-associated kinase 1/IRAK1-dependent signaling during viral entry, representing a means by which the alphaviruses may evade innate immune detection and activation prior to viral gene expression. Provides the signal sequence for the translocation of the precursor of protein E3/E2 to the host endoplasmic reticulum. Furin-cleaved E3 remains associated with spike glycoprotein E1 and mediates pH protection of the latter during the transport via the secretory pathway. After virion release from the host cell, the assembly protein E3 is gradually released in the extracellular space. Its function is as follows. Plays a role in viral attachment to target host cell, by binding to the cell receptors VLDLR or LRP8/APOER2. Synthesized as a pE2 precursor which is processed by furin at the cell membrane just before virion budding, giving rise to E2-E1 heterodimer. The pE2-E1 heterodimer is stable, whereas E2-E1 is unstable and dissociate at low pH. pE2 is processed at the last step, presumably to avoid E1 fusion activation before its final export to cell surface. E2 C-terminus contains a transitory transmembrane that would be disrupted by palmitoylation, resulting in reorientation of the C-terminal tail from lumenal to cytoplasmic side. This step is critical since E2 C-terminus is involved in budding by interacting with capsid proteins. This release of E2 C-terminus in cytoplasm occurs lately in protein export, and precludes premature assembly of particles at the endoplasmic reticulum membrane. In terms of biological role, acts as a viroporin that participates in virus glycoprotein processing and transport to the plasma membrane, cell permeabilization and budding of viral particles. Disrupts the calcium homeostasis of the cell, probably at the endoplasmic reticulum level resulting in the increased levels of cytoplasmic calcium. Because of its lipophilic properties, the 6K protein is postulated to influence the selection of lipids that interact with the transmembrane domains of the glycoproteins, which, in turn, affects the deformability of the bilayer required for the extreme curvature that occurs as budding proceeds. Present in low amount in virions, about 3% compared to viral glycoproteins. Functionally, class II viral fusion protein. Fusion activity is inactive as long as E1 is bound to E2 in mature virion. After virus attachment to target cell via host VLDLR or LRP8/APOER2 and endocytosis, acidification of the endosome induces dissociation of E1/E2 heterodimer and concomitant trimerization of the E1 subunits. This E1 trimer is fusion active, and promotes release of viral nucleocapsid in cytoplasm after endosome and viral membrane fusion. Efficient fusion requires the presence of cholesterol and sphingolipid in the target membrane. This Acrocephalus scirpaceus (Eurasian reed-warbler) protein is Structural polyprotein.